The chain runs to 735 residues: Type-3 glutamine synthetase (735 aa).

Residues 89–183 (THYCHWFLPL…IPTAFCSWTG (95 aa)) form the GS beta-grasp domain. A GS catalytic domain is found at 188–621 (QKTPLLRSME…SLYDLVSTLV (434 aa)).

The protein belongs to the glutamine synthetase family. Type 3 subfamily. In terms of assembly, homohexamer.

The catalysed reaction is L-glutamate + NH4(+) + ATP = L-glutamine + ADP + phosphate + H(+). The polypeptide is Type-3 glutamine synthetase (glnA3) (Dictyostelium discoideum (Social amoeba)).